The sequence spans 1061 residues: E3 ubiquitin-protein ligase Smurf1 (1061 aa).

The C2 domain maps to 1–116; sequence MNKLDYPRRN…KGAGFQRLDL (116 aa). Disordered stretches follow at residues 143–176 and 188–496; these read SGNP…WEER and HATK…SGQR. The 34-residue stretch at 167–200 folds into the WW 1 domain; that stretch reads DSLPEGWEERRTDNGRVYYVNHATKSTQWDRPRQ. Polar residues-rich tracts occupy residues 207-225 and 233-255; these read SHAT…NSGD and TRST…SVTA. Ser-262 bears the Phosphoserine mark. The span at 264–273 shows a compositional bias: polar residues; it reads EILSSVGKEN. 2 stretches are compositionally biased toward low complexity: residues 274–300 and 311–322; these read TSPT…SAGG and PATPTSSTTSAS. A compositionally biased stretch (polar residues) spans 348–359; that stretch reads TPTSPTGQQNYV. Low complexity predominate over residues 360–378; that stretch reads NGNAQNGSTSGNGSGQAAQ. A compositionally biased stretch (polar residues) spans 379 to 392; it reads PQSASNGWTQEDAA. The segment covering 393 to 409 has biased composition (low complexity); that stretch reads TTTSPSTTTSPPRHSQS. Thr-412 carries the post-translational modification Phosphothreonine. Residue Ser-416 is modified to Phosphoserine. Residues 417 to 439 show a composition bias toward polar residues; that stretch reads PPASVTPSANGNVHSPNANSTPA. The segment covering 480–494 has biased composition (gly residues); it reads RNGGTSGGGGGGGSG. WW domains follow at residues 513-546 and 561-594; these read LDLP…DPRI and GPLP…DPRL. Residues 513–602 are interaction with MAD; that stretch reads LDLPPGYEMR…RLSGSILQMI (90 aa). Low complexity-rich tracts occupy residues 608 to 617 and 624 to 656; these read PPTSAANAGT and TPAT…TNPP. The disordered stretch occupies residues 608-661; sequence PPTSAANAGTPAPPSATPATPSAAAAVPPQATPASNATPTTLTTTTNPPHRIVP. The HECT domain occupies 723-1061; the sequence is RAKDMRKRLM…VEETCGFAVE (339 aa). Cys-1029 functions as the Glycyl thioester intermediate in the catalytic mechanism.

Interacts with phosphorylated MAD.

It catalyses the reaction S-ubiquitinyl-[E2 ubiquitin-conjugating enzyme]-L-cysteine + [acceptor protein]-L-lysine = [E2 ubiquitin-conjugating enzyme]-L-cysteine + N(6)-ubiquitinyl-[acceptor protein]-L-lysine.. The protein operates within protein modification; protein ubiquitination. Functionally, E3 ubiquitin-protein ligase which accepts ubiquitin from an E2 ubiquitin-conjugating enzyme in the form of a thioester and then directly transfers the ubiquitin to targeted substrates. Down-regulates Dpp signaling after gastrulation by promoting MAD ubiquitination and subsequent degradation. The polypeptide is E3 ubiquitin-protein ligase Smurf1 (Drosophila melanogaster (Fruit fly)).